A 502-amino-acid chain; its full sequence is Lipoprotein LipO (502 aa).

Positions 1 to 21 (MKIRMRKKWMALPLAAMMIAG) are cleaved as a signal peptide. A lipid anchor (N-palmitoyl cysteine) is attached at Cys22. Cys22 is lipidated: S-diacylglycerol cysteine.

Its subcellular location is the cell membrane. This Bacillus subtilis (strain 168) protein is Lipoprotein LipO (lipO).